We begin with the raw amino-acid sequence, 364 residues long: Fructose-1,6-bisphosphatase class 1 2 (364 aa).

Positions 101, 123, 125, and 126 each coordinate Mg(2+). Residues 126–129 (DGSS) and N218 each bind substrate. Residue E290 participates in Mg(2+) binding.

The protein belongs to the FBPase class 1 family. Homotetramer. The cofactor is Mg(2+).

Its subcellular location is the cytoplasm. It catalyses the reaction beta-D-fructose 1,6-bisphosphate + H2O = beta-D-fructose 6-phosphate + phosphate. It participates in carbohydrate biosynthesis; gluconeogenesis. This is Fructose-1,6-bisphosphatase class 1 2 from Cupriavidus taiwanensis (strain DSM 17343 / BCRC 17206 / CCUG 44338 / CIP 107171 / LMG 19424 / R1) (Ralstonia taiwanensis (strain LMG 19424)).